The chain runs to 418 residues: Serine hydroxymethyltransferase (418 aa).

(6S)-5,6,7,8-tetrahydrofolate is bound by residues L121 and 125–127; that span reads GHL. K230 is subject to N6-(pyridoxal phosphate)lysine. A (6S)-5,6,7,8-tetrahydrofolate-binding site is contributed by 355-357; that stretch reads SPF.

This sequence belongs to the SHMT family. As to quaternary structure, homodimer. It depends on pyridoxal 5'-phosphate as a cofactor.

It localises to the cytoplasm. The catalysed reaction is (6R)-5,10-methylene-5,6,7,8-tetrahydrofolate + glycine + H2O = (6S)-5,6,7,8-tetrahydrofolate + L-serine. Its pathway is one-carbon metabolism; tetrahydrofolate interconversion. It functions in the pathway amino-acid biosynthesis; glycine biosynthesis; glycine from L-serine: step 1/1. Catalyzes the reversible interconversion of serine and glycine with tetrahydrofolate (THF) serving as the one-carbon carrier. This reaction serves as the major source of one-carbon groups required for the biosynthesis of purines, thymidylate, methionine, and other important biomolecules. Also exhibits THF-independent aldolase activity toward beta-hydroxyamino acids, producing glycine and aldehydes, via a retro-aldol mechanism. The polypeptide is Serine hydroxymethyltransferase (Streptococcus pyogenes serotype M3 (strain ATCC BAA-595 / MGAS315)).